Here is a 324-residue protein sequence, read N- to C-terminus: Ribose 1,5-bisphosphate isomerase (324 aa).

Residues 22-25 (RGAG) and Arg-65 contribute to the substrate site. The Proton acceptor role is filled by Cys-135. A substrate-binding site is contributed by 137–139 (SKA). Asp-204 serves as the catalytic Proton donor. Substrate-binding positions include 214–215 (NK) and Lys-240.

It belongs to the eIF-2B alpha/beta/delta subunits family. R15P isomerase subfamily.

It carries out the reaction alpha-D-ribose 1,5-bisphosphate = D-ribulose 1,5-bisphosphate. In terms of biological role, catalyzes the isomerization of ribose 1,5-bisphosphate (R15P) to ribulose 1,5-bisphosphate (RuBP), the CO(2) acceptor and substrate for RubisCO. Functions in an archaeal AMP degradation pathway, together with AMP phosphorylase and RubisCO. This Pyrococcus horikoshii (strain ATCC 700860 / DSM 12428 / JCM 9974 / NBRC 100139 / OT-3) protein is Ribose 1,5-bisphosphate isomerase.